A 429-amino-acid chain; its full sequence is Histidine--tRNA ligase (429 aa).

The protein belongs to the class-II aminoacyl-tRNA synthetase family. Homodimer.

The protein resides in the cytoplasm. It carries out the reaction tRNA(His) + L-histidine + ATP = L-histidyl-tRNA(His) + AMP + diphosphate + H(+). The chain is Histidine--tRNA ligase from Pseudomonas paraeruginosa (strain DSM 24068 / PA7) (Pseudomonas aeruginosa (strain PA7)).